The sequence spans 259 residues: Ribosomal RNA small subunit methyltransferase J (259 aa).

S-adenosyl-L-methionine-binding positions include 101 to 102 (RD), 117 to 118 (ER), 153 to 154 (SS), and aspartate 176.

Belongs to the methyltransferase superfamily. RsmJ family.

The protein localises to the cytoplasm. The catalysed reaction is guanosine(1516) in 16S rRNA + S-adenosyl-L-methionine = N(2)-methylguanosine(1516) in 16S rRNA + S-adenosyl-L-homocysteine + H(+). Its function is as follows. Specifically methylates the guanosine in position 1516 of 16S rRNA. This chain is Ribosomal RNA small subunit methyltransferase J, found in Aliivibrio fischeri (strain ATCC 700601 / ES114) (Vibrio fischeri).